The following is a 102-amino-acid chain: Small ribosomal subunit protein uS10 (102 aa).

This sequence belongs to the universal ribosomal protein uS10 family. In terms of assembly, part of the 30S ribosomal subunit.

Its function is as follows. Involved in the binding of tRNA to the ribosomes. In Streptococcus pneumoniae (strain CGSP14), this protein is Small ribosomal subunit protein uS10.